A 572-amino-acid chain; its full sequence is uncharacterized protein (572 aa).

The disordered stretch occupies residues 13 to 45; the sequence is ALIAKPKGKTVSGDGADPKKRGRPKKNATEPAV. Residues 177-204 are a coiled coil; that stretch reads VLTKEMEEKLEALDRDMRTAEETKVSIA.

This is an uncharacterized protein from Dryophytes versicolor (chameleon treefrog).